Reading from the N-terminus, the 450-residue chain is C4-dicarboxylate transport protein (450 aa).

The next 8 helical transmembrane spans lie at V25–A45, L56–M76, M90–V110, I162–A182, L200–I220, L234–A254, I319–G339, and A367–V387.

Belongs to the dicarboxylate/amino acid:cation symporter (DAACS) (TC 2.A.23) family.

Its subcellular location is the cell inner membrane. Functionally, responsible for the transport of dicarboxylates such as succinate, fumarate, and malate from the periplasm across the membrane. This chain is C4-dicarboxylate transport protein, found in Acidovorax ebreus (strain TPSY) (Diaphorobacter sp. (strain TPSY)).